We begin with the raw amino-acid sequence, 147 residues long: Hemoglobin subunit beta (147 aa).

Position 2 is an N-acetylvaline (Val-2). The 145-residue stretch at 3-147 folds into the Globin domain; the sequence is HLTGDEKAAV…VANALAHKYH (145 aa). At Thr-13 the chain carries Phosphothreonine. The residue at position 45 (Ser-45) is a Phosphoserine. Position 60 is an N6-acetyllysine (Lys-60). Position 64 (His-64) interacts with heme b. At Lys-83 the chain carries N6-acetyllysine. His-93 is a heme b binding site. The residue at position 94 (Cys-94) is an S-nitrosocysteine. Lys-145 is modified (N6-acetyllysine).

This sequence belongs to the globin family. In terms of assembly, heterotetramer of two alpha chains and two beta chains. As to expression, red blood cells.

In terms of biological role, involved in oxygen transport from the lung to the various peripheral tissues. This is Hemoglobin subunit beta (HBB) from Saimiri sciureus (Common squirrel monkey).